The sequence spans 406 residues: Peptidyl-alpha-hydroxyglycine alpha-amidating lyase 2 (406 aa).

Positions 1–19 (MSRLLFVALLAISLGYVAS) are cleaved as a signal peptide. NHL repeat units follow at residues 168 to 209 (GAIK…FKPF), 218 to 261 (GKRF…FNAA), 264 to 308 (LLRT…PKAG), and 358 to 402 (DPRS…RVWK). 2 cysteine pairs are disulfide-bonded: Cys231/Cys251 and Cys293/Cys304.

This sequence belongs to the peptidyl-alpha-hydroxyglycine alpha-amidating lyase family. Zn(2+) serves as cofactor. N-glycosylated. Only found in a subset of neurons distributed throughout all levels of the central nervous system (CNS). Present in at least some neuroendocrine cells. In adult brains, it is only present in a small handful of cells, the majority of which being distributed in distal parts of the medulla, with a higher expression in the posterior surface of the brain (at protein level).

It is found in the secreted. The enzyme catalyses a [peptide]-C-terminal (2S)-2-hydroxyglycine = a [peptide]-C-terminal amide + glyoxylate. Functionally, peptidyl-alpha-hydroxylglycine alpha-amidating lyase that catalyzes an essential reaction in C-terminal alpha-amidation of peptides. Mediates the dismutation of the unstable peptidyl(2-hydroxyglycine) intermediate to glyoxylate and the corresponding desglycine peptide amide. C-terminal amidation of peptides such as neuropeptides is essential for full biological activity. The chain is Peptidyl-alpha-hydroxyglycine alpha-amidating lyase 2 (Pal2) from Drosophila melanogaster (Fruit fly).